We begin with the raw amino-acid sequence, 99 residues long: Phosphoribosyl-ATP pyrophosphatase (99 aa).

Belongs to the PRA-PH family.

It is found in the cytoplasm. It carries out the reaction 1-(5-phospho-beta-D-ribosyl)-ATP + H2O = 1-(5-phospho-beta-D-ribosyl)-5'-AMP + diphosphate + H(+). It functions in the pathway amino-acid biosynthesis; L-histidine biosynthesis; L-histidine from 5-phospho-alpha-D-ribose 1-diphosphate: step 2/9. This is Phosphoribosyl-ATP pyrophosphatase from Methanococcoides burtonii (strain DSM 6242 / NBRC 107633 / OCM 468 / ACE-M).